The following is a 202-amino-acid chain: CASP-like protein 2B1 (202 aa).

At 1–29 (MSYLGVGVSPGNVPVYHGSNLKVIDKRVR) the chain is on the cytoplasmic side. Residues 30 to 50 (LAELVLRCLICGLGVLAAVLV) form a helical membrane-spanning segment. Residues 51 to 72 (GTDTQVKEIFSIQKKARFTDMK) lie on the Extracellular side of the membrane. A helical transmembrane segment spans residues 73-93 (ALVFLVIANGIAAAYSLLQGV). Topologically, residues 94-109 (RCVVGMVRGSALFSKP) are cytoplasmic. The chain crosses the membrane as a helical span at residues 110 to 130 (LAWAIFSGDQMMAYLTVAAVA). Topologically, residues 131-164 (AAAQSAVFAKLGQPELQWMKICNMYGKFCNQVGE) are extracellular. Residues 165–185 (GIASALLVSVSMVVLSCISAF) traverse the membrane as a helical segment. At 186 to 202 (SLFRLYGANKGKDCTRW) the chain is on the cytoplasmic side.

This sequence belongs to the Casparian strip membrane proteins (CASP) family. Homodimer and heterodimers.

Its subcellular location is the cell membrane. The polypeptide is CASP-like protein 2B1 (Ricinus communis (Castor bean)).